The sequence spans 123 residues: Putative iron-sulfur cluster insertion protein ErpA (123 aa).

Positions 51, 115, and 117 each coordinate iron-sulfur cluster.

The protein belongs to the HesB/IscA family. Homodimer. Iron-sulfur cluster is required as a cofactor.

Required for insertion of 4Fe-4S clusters. The polypeptide is Putative iron-sulfur cluster insertion protein ErpA (Burkholderia cenocepacia (strain HI2424)).